We begin with the raw amino-acid sequence, 292 residues long: 2-(5''-triphosphoribosyl)-3'-dephosphocoenzyme-A synthase (292 aa).

It belongs to the CitG/MdcB family.

It carries out the reaction 3'-dephospho-CoA + ATP = 2'-(5''-triphospho-alpha-D-ribosyl)-3'-dephospho-CoA + adenine. In terms of biological role, catalyzes the formation of 2-(5''-triphosphoribosyl)-3'-dephosphocoenzyme-A, the precursor of the prosthetic group of the holo-acyl carrier protein (gamma chain) of citrate lyase, from ATP and dephospho-CoA. This chain is 2-(5''-triphosphoribosyl)-3'-dephosphocoenzyme-A synthase, found in Escherichia coli O6:K15:H31 (strain 536 / UPEC).